Reading from the N-terminus, the 352-residue chain is Phenylalanine--tRNA ligase alpha subunit (352 aa).

Glu258 contributes to the Mg(2+) binding site.

It belongs to the class-II aminoacyl-tRNA synthetase family. Phe-tRNA synthetase alpha subunit type 1 subfamily. Tetramer of two alpha and two beta subunits. It depends on Mg(2+) as a cofactor.

The protein localises to the cytoplasm. It catalyses the reaction tRNA(Phe) + L-phenylalanine + ATP = L-phenylalanyl-tRNA(Phe) + AMP + diphosphate + H(+). This is Phenylalanine--tRNA ligase alpha subunit from Staphylococcus aureus (strain Mu3 / ATCC 700698).